The chain runs to 109 residues: U4-lycotoxin-Ls1a (109 aa).

The first 22 residues, 1-22 (MKVLVLFSVLFLTLFSYSSTEA), serve as a signal peptide directing secretion. Residues 23-44 (IDEFDSDAEEDMLSLMANEQVR) constitute a propeptide that is removed on maturation. The tract at residues 45–88 (AKACTPRLHDCSHDRHSCCRGELFKDVCYCFYPEGEDKTEVCSC) is knottin domain. Disulfide bonds link C48-C63, C55-C72, C62-C88, and C74-C86. Residues 89-108 (QQPKSHKYIEKVVDKAKTVV) are linear cationic cytotoxin domain.

Belongs to the neurotoxin 19 (CSTX) family. 05 (U4-Lctx) subfamily. As to expression, expressed by the venom gland.

It localises to the secreted. In terms of biological role, enhances the high-affinity desensitization of human P2RX3 purinoceptors. The sequence is that of U4-lycotoxin-Ls1a from Lycosa singoriensis (Wolf spider).